The sequence spans 153 residues: Myoglobin (153 aa).

A Globin domain is found at 2 to 147 (GLNDQEWQQV…FRNDMASKYK (146 aa)). Position 65 (His65) interacts with nitrite. His65 provides a ligand contact to O2. His93 provides a ligand contact to heme b.

This sequence belongs to the globin family. As to quaternary structure, monomeric.

The protein localises to the cytoplasm. The protein resides in the sarcoplasm. The enzyme catalyses Fe(III)-heme b-[protein] + nitric oxide + H2O = Fe(II)-heme b-[protein] + nitrite + 2 H(+). It carries out the reaction H2O2 + AH2 = A + 2 H2O. In terms of biological role, monomeric heme protein which primary function is to store oxygen and facilitate its diffusion within muscle tissues. Reversibly binds oxygen through a pentacoordinated heme iron and enables its timely and efficient release as needed during periods of heightened demand. Depending on the oxidative conditions of tissues and cells, and in addition to its ability to bind oxygen, it also has a nitrite reductase activity whereby it regulates the production of bioactive nitric oxide. Under stress conditions, like hypoxia and anoxia, it also protects cells against reactive oxygen species thanks to its pseudoperoxidase activity. This chain is Myoglobin (MB), found in Aptenodytes forsteri (Emperor penguin).